Reading from the N-terminus, the 313-residue chain is 3'-5' exoribonuclease YhaM (313 aa).

Positions Ser-22–Ala-90 form a DNA-binding region, OB. The HD domain occupies His-163–Ser-279.

It belongs to the YhaM family.

In terms of biological role, shows a 3'-5' exoribonuclease activity. The chain is 3'-5' exoribonuclease YhaM from Listeria innocua serovar 6a (strain ATCC BAA-680 / CLIP 11262).